A 206-amino-acid polypeptide reads, in one-letter code: Protein-methionine-sulfoxide reductase heme-binding subunit MsrQ (206 aa).

The next 6 membrane-spanning stretches (helical) occupy residues isoleucine 7–glycine 27, phenylalanine 43–tyrosine 63, leucine 77–leucine 97, glycine 112–tryptophan 132, tryptophan 142–valine 162, and serine 172–isoleucine 192.

The protein belongs to the MsrQ family. As to quaternary structure, heterodimer of a catalytic subunit (MsrP) and a heme-binding subunit (MsrQ). It depends on FMN as a cofactor. Heme b is required as a cofactor.

The protein localises to the cell inner membrane. Its function is as follows. Part of the MsrPQ system that repairs oxidized periplasmic proteins containing methionine sulfoxide residues (Met-O), using respiratory chain electrons. Thus protects these proteins from oxidative-stress damage caused by reactive species of oxygen and chlorine generated by the host defense mechanisms. MsrPQ is essential for the maintenance of envelope integrity under bleach stress, rescuing a wide series of structurally unrelated periplasmic proteins from methionine oxidation. MsrQ provides electrons for reduction to the reductase catalytic subunit MsrP, using the quinone pool of the respiratory chain. The sequence is that of Protein-methionine-sulfoxide reductase heme-binding subunit MsrQ from Pasteurella multocida (strain Pm70).